A 500-amino-acid chain; its full sequence is MPAFSLMIQGTTSDAGKSTLVTALCRLFYRRGISVAPFKPQNMALNSAVTKDGNEIGRAQAVQAYAAGLEPQVDMNPILLKPNTDTGAQVIIQGKAVGNMNAVGYHEYKSIAKVAALDSYQRLANQYQAVLIEGAGSPAEINLRARDIANMGFAESIDCPVIIIADIDKGGVFAHLVGTLDLLSPSEQDRVIGFVINRFRGDISLLQSGLDWLEERTGKPVLGVLPFLKGFHLESEDAVAKSPIKADSKAKLNIVIPIMPRTSNHTDWDALRLHPEVQVTLVGANETIPPADLVILPGSKSVQSDLAYLRQEGWEDYLNKHLRYGGKVIGICGGYQMLGEQLLDPLGLENQHANTRSTGFGFIPMETVLKEEKQLKQRQGQLAFAANAQVTGYEIHSGVSRFTDETQIAHFALLDDGKNKENSEKEGYISPDGQIIGTYLHGVFDHPDALQALLNWAGVDQAAAFDYDQFRDKEIDRLADSTEQNMNIDALIEQCQNFQQ.

Positions 251 to 449 constitute a GATase cobBQ-type domain; sequence KLNIVIPIMP…LHGVFDHPDA (199 aa). C332 (nucleophile) is an active-site residue. The active site involves H441.

Belongs to the CobB/CobQ family. CobQ subfamily.

The protein operates within cofactor biosynthesis; adenosylcobalamin biosynthesis. Catalyzes amidations at positions B, D, E, and G on adenosylcobyrinic A,C-diamide. NH(2) groups are provided by glutamine, and one molecule of ATP is hydrogenolyzed for each amidation. This is Cobyric acid synthase from Marinomonas sp. (strain MWYL1).